The following is a 428-amino-acid chain: C4-dicarboxylate transport protein (428 aa).

Helical transmembrane passes span 8–28 (SLYF…HFYP), 44–64 (LIKM…IAGM), 76–96 (VALL…LIIV), 142–162 (IGAF…LFGF), 184–206 (VIFG…AMAF), 222–242 (LIIC…GSIA), 326–346 (IVHQ…AAGV), and 352–372 (IVLA…LALI).

The protein belongs to the dicarboxylate/amino acid:cation symporter (DAACS) (TC 2.A.23) family.

Its subcellular location is the cell inner membrane. Its function is as follows. Responsible for the transport of dicarboxylates such as succinate, fumarate, and malate from the periplasm across the membrane. The sequence is that of C4-dicarboxylate transport protein from Shigella flexneri.